The chain runs to 906 residues: Cadherin-2 (906 aa).

Residues Met-1–Ala-25 form the signal peptide. Residues Ser-26 to Arg-159 constitute a propeptide that is removed on maturation. A Phosphoserine modification is found at Ser-96. Cadherin domains are found at residues Asp-160–Phe-267, Leu-268–Phe-382, Thr-383–Phe-497, Ala-498–Pro-603, and Gln-604–Gly-717. Residues Asp-160–Thr-724 lie on the Extracellular side of the membrane. Residue Glu-170 coordinates Ca(2+). Asn-190 carries an N-linked (GlcNAc...) asparagine glycan. Residues Asp-226, Glu-228, Asp-259, Met-260, Asn-261, Asp-262, and Asn-263 each coordinate Ca(2+). Residue Asn-273 is glycosylated (N-linked (GlcNAc...) asparagine). Residues Asp-293, Asp-295, and Asn-301 each coordinate Ca(2+). Asn-325 carries N-linked (GlcNAc...) asparagine glycosylation. Asp-353 contributes to the Ca(2+) binding site. N-linked (GlcNAc...) asparagine glycosylation is found at Asn-402, Asn-572, Asn-622, Asn-651, and Asn-692. The chain crosses the membrane as a helical span at residues Ile-725–Trp-745. The Cytoplasmic portion of the chain corresponds to Met-746–Asp-906. A compositionally biased stretch (low complexity) spans Ser-863–Gly-880. Positions Ser-863 to Asp-883 are disordered.

As to quaternary structure, homodimer (via extracellular region). Can also form heterodimers with other cadherins (via extracellular region). Dimerization occurs in trans, i.e. with a cadherin chain from another cell. Interacts with PCDH8; this complex may also include TAOK2. The interaction with PCDH8 may lead to internalization through TAOK2/p38 MAPK pathway. Identified in a complex containing FGFR4, NCAM1, CDH2, PLCG1, FRS2, SRC, SHC1, GAP43 and CTTN. May interact with OBSCN (via protein kinase domain 2). Interacts with FBXO45. Cleaved by MMP24. Ectodomain cleavage leads to the generation of a soluble 90 kDa N-terminal soluble fragment and a 45 kDa membrane-bound C-terminal fragment 1 (CTF1), which is further cleaved by gamma-secretase into a 35 kDa. Cleavage in neural stem cells by MMP24 affects CDH2-mediated anchorage of neural stem cells to ependymocytes in the adult subependymal zone, leading to modulate neural stem cell quiescence. In terms of processing, may be phosphorylated by OBSCN. As to expression, in testis, expressed in Sertoli and germ cells.

It localises to the cell membrane. The protein localises to the sarcolemma. It is found in the cell junction. The protein resides in the cell surface. Its subcellular location is the desmosome. It localises to the adherens junction. Calcium-dependent cell adhesion protein; preferentially mediates homotypic cell-cell adhesion by dimerization with a CDH2 chain from another cell. Cadherins may thus contribute to the sorting of heterogeneous cell types. Acts as a regulator of neural stem cells quiescence by mediating anchorage of neural stem cells to ependymocytes in the adult subependymal zone: upon cleavage by MMP24, CDH2-mediated anchorage is affected, leading to modulate neural stem cell quiescence. Plays a role in cell-to-cell junction formation between pancreatic beta cells and neural crest stem (NCS) cells, promoting the formation of processes by NCS cells. Required for proper neurite branching. Required for pre- and postsynaptic organization. CDH2 may be involved in neuronal recognition mechanism. In hippocampal neurons, may regulate dendritic spine density. The protein is Cadherin-2 (Cdh2) of Rattus norvegicus (Rat).